The sequence spans 440 residues: Xylose isomerase (440 aa).

Residues D307 and D309 each coordinate Mg(2+).

Belongs to the xylose isomerase family. In terms of assembly, homotetramer. Requires Mg(2+) as cofactor.

The protein resides in the cytoplasm. It catalyses the reaction alpha-D-xylose = alpha-D-xylulofuranose. This Escherichia coli (strain K12 / MC4100 / BW2952) protein is Xylose isomerase.